Reading from the N-terminus, the 283-residue chain is Zinc import ATP-binding protein ZnuC (283 aa).

The ABC transporter domain occupies V13–R228. ATP is bound at residue G45 to S52. Residues H264 to G283 form a disordered region. The span at G272 to G283 shows a compositional bias: gly residues.

It belongs to the ABC transporter superfamily. Zinc importer (TC 3.A.1.15.5) family. The complex is composed of two ATP-binding proteins (ZnuC), two transmembrane proteins (ZnuB) and a solute-binding protein (ZnuA).

The protein localises to the cell inner membrane. The catalysed reaction is Zn(2+)(out) + ATP(in) + H2O(in) = Zn(2+)(in) + ADP(in) + phosphate(in) + H(+)(in). Its function is as follows. Part of the ABC transporter complex ZnuABC involved in zinc import. Responsible for energy coupling to the transport system. The protein is Zinc import ATP-binding protein ZnuC of Chelativorans sp. (strain BNC1).